Reading from the N-terminus, the 237-residue chain is Uridylate kinase (237 aa).

9 to 12 (KLSG) contributes to the ATP binding site. Position 51 (Gly51) interacts with UMP. Residues Gly52 and Arg56 each contribute to the ATP site. UMP is bound by residues Asp71 and 132–139 (CGNPFFTT). The ATP site is built by Thr159, Tyr165, and Asp168.

This sequence belongs to the UMP kinase family. In terms of assembly, homohexamer.

It is found in the cytoplasm. It catalyses the reaction UMP + ATP = UDP + ADP. It functions in the pathway pyrimidine metabolism; CTP biosynthesis via de novo pathway; UDP from UMP (UMPK route): step 1/1. With respect to regulation, inhibited by UTP. Its function is as follows. Catalyzes the reversible phosphorylation of UMP to UDP. This is Uridylate kinase from Prochlorococcus marinus (strain MIT 9303).